The sequence spans 72 residues: Large ribosomal subunit protein bL31 (72 aa).

Cysteine 16, cysteine 18, cysteine 37, and cysteine 40 together coordinate Zn(2+).

The protein belongs to the bacterial ribosomal protein bL31 family. Type A subfamily. In terms of assembly, part of the 50S ribosomal subunit. Requires Zn(2+) as cofactor.

In terms of biological role, binds the 23S rRNA. The protein is Large ribosomal subunit protein bL31 of Buchnera aphidicola subsp. Acyrthosiphon pisum (strain APS) (Acyrthosiphon pisum symbiotic bacterium).